Here is a 419-residue protein sequence, read N- to C-terminus: Creatine kinase S-type, mitochondrial (419 aa).

A mitochondrion-targeting transit peptide spans 1 to 39 (MASAFSKLLTGRNASLLFTTLGTSALTTGYLLNRQKVSA). The segment at 40–64 (DAREQHKLFPPSADYPDLRKHNNCM) is cardiolipin-binding. In terms of domain architecture, Phosphagen kinase N-terminal spans 46–132 (KLFPPSADYP…FDPVIKLRHN (87 aa)). A Phosphagen kinase C-terminal domain is found at 159 to 401 (YVLSSRVRTG…NYLVDCEKKL (243 aa)). Residues 162-166 (SSRVR) and His225 each bind ATP. Tyr255 bears the Phosphotyrosine mark. ATP-binding positions include Arg270, Arg326, 354–359 (RGTGGV), and Asp369. The residue at position 356 (Thr356) is a Phosphothreonine.

It belongs to the ATP:guanido phosphotransferase family. In terms of assembly, exists as an octamer composed of four CKMT2 homodimers. Sarcomere-specific. Found only in heart and skeletal muscles.

It is found in the mitochondrion inner membrane. The enzyme catalyses creatine + ATP = N-phosphocreatine + ADP + H(+). In terms of biological role, reversibly catalyzes the transfer of phosphate between ATP and various phosphogens (e.g. creatine phosphate). Creatine kinase isoenzymes play a central role in energy transduction in tissues with large, fluctuating energy demands, such as skeletal muscle, heart, brain and spermatozoa. This Rattus norvegicus (Rat) protein is Creatine kinase S-type, mitochondrial (Ckmt2).